The chain runs to 295 residues: N-acetylmuramic acid 6-phosphate etherase (295 aa).

Residues Ala-53–Lys-216 enclose the SIS domain. Residue Glu-81 is the Proton donor of the active site. The active site involves Glu-112.

Belongs to the GCKR-like family. MurNAc-6-P etherase subfamily. Homodimer.

It carries out the reaction N-acetyl-D-muramate 6-phosphate + H2O = N-acetyl-D-glucosamine 6-phosphate + (R)-lactate. The protein operates within amino-sugar metabolism; N-acetylmuramate degradation. Specifically catalyzes the cleavage of the D-lactyl ether substituent of MurNAc 6-phosphate, producing GlcNAc 6-phosphate and D-lactate. The sequence is that of N-acetylmuramic acid 6-phosphate etherase from Staphylococcus epidermidis (strain ATCC 35984 / DSM 28319 / BCRC 17069 / CCUG 31568 / BM 3577 / RP62A).